Here is a 148-residue protein sequence, read N- to C-terminus: D-aminoacyl-tRNA deacylase (148 aa).

A Gly-cisPro motif, important for rejection of L-amino acids motif is present at residues 137 to 138 (GP).

Belongs to the DTD family. Homodimer.

Its subcellular location is the cytoplasm. It carries out the reaction glycyl-tRNA(Ala) + H2O = tRNA(Ala) + glycine + H(+). The enzyme catalyses a D-aminoacyl-tRNA + H2O = a tRNA + a D-alpha-amino acid + H(+). Its function is as follows. An aminoacyl-tRNA editing enzyme that deacylates mischarged D-aminoacyl-tRNAs. Also deacylates mischarged glycyl-tRNA(Ala), protecting cells against glycine mischarging by AlaRS. Acts via tRNA-based rather than protein-based catalysis; rejects L-amino acids rather than detecting D-amino acids in the active site. By recycling D-aminoacyl-tRNA to D-amino acids and free tRNA molecules, this enzyme counteracts the toxicity associated with the formation of D-aminoacyl-tRNA entities in vivo and helps enforce protein L-homochirality. The sequence is that of D-aminoacyl-tRNA deacylase from Ligilactobacillus salivarius (strain UCC118) (Lactobacillus salivarius).